We begin with the raw amino-acid sequence, 310 residues long: Small ribosomal subunit biogenesis GTPase RsgA (310 aa).

The CP-type G domain maps to 77–238 (LSKQSHILAA…IIDTPGIKGF (162 aa)). GTP is bound by residues 126–129 (NKVD) and 180–188 (GHSGVGKST). Zn(2+) contacts are provided by C262, C267, H269, and C275.

Belongs to the TRAFAC class YlqF/YawG GTPase family. RsgA subfamily. Monomer. Associates with 30S ribosomal subunit, binds 16S rRNA. It depends on Zn(2+) as a cofactor.

It is found in the cytoplasm. Its function is as follows. One of several proteins that assist in the late maturation steps of the functional core of the 30S ribosomal subunit. Helps release RbfA from mature subunits. May play a role in the assembly of ribosomal proteins into the subunit. Circularly permuted GTPase that catalyzes slow GTP hydrolysis, GTPase activity is stimulated by the 30S ribosomal subunit. The sequence is that of Small ribosomal subunit biogenesis GTPase RsgA from Bacteroides fragilis (strain ATCC 25285 / DSM 2151 / CCUG 4856 / JCM 11019 / LMG 10263 / NCTC 9343 / Onslow / VPI 2553 / EN-2).